Reading from the N-terminus, the 88-residue chain is UPF0250 protein swp_3927 (88 aa).

It belongs to the UPF0250 family.

In Shewanella piezotolerans (strain WP3 / JCM 13877), this protein is UPF0250 protein swp_3927.